Consider the following 397-residue polypeptide: Cytoplasmic tRNA 2-thiolation protein 2 (397 aa).

This sequence belongs to the CTU2/NCS2 family.

It is found in the cytoplasm. It functions in the pathway tRNA modification; 5-methoxycarbonylmethyl-2-thiouridine-tRNA biosynthesis. Its function is as follows. Plays a central role in 2-thiolation of mcm(5)S(2)U at tRNA wobble positions of tRNA(Lys), tRNA(Glu) and tRNA(Gln). May act by forming a heterodimer with NCS6/CTU1 that ligates sulfur from thiocarboxylated URM1 onto the uridine of tRNAs at wobble position. This is Cytoplasmic tRNA 2-thiolation protein 2 from Drosophila grimshawi (Hawaiian fruit fly).